Here is a 365-residue protein sequence, read N- to C-terminus: 3-dehydroquinate synthase (365 aa).

NAD(+) contacts are provided by residues G106–D110, T130–T131, K142, K151, and F169–T172. Zn(2+) is bound by residues E184, H247, and H264.

It belongs to the sugar phosphate cyclases superfamily. Dehydroquinate synthase family. It depends on NAD(+) as a cofactor. Co(2+) serves as cofactor. Zn(2+) is required as a cofactor.

It is found in the cytoplasm. It carries out the reaction 7-phospho-2-dehydro-3-deoxy-D-arabino-heptonate = 3-dehydroquinate + phosphate. Its pathway is metabolic intermediate biosynthesis; chorismate biosynthesis; chorismate from D-erythrose 4-phosphate and phosphoenolpyruvate: step 2/7. Functionally, catalyzes the conversion of 3-deoxy-D-arabino-heptulosonate 7-phosphate (DAHP) to dehydroquinate (DHQ). The protein is 3-dehydroquinate synthase of Listeria monocytogenes serovar 1/2a (strain ATCC BAA-679 / EGD-e).